The following is a 430-amino-acid chain: Ribosomal protein uS12 methylthiotransferase RimO (430 aa).

Residues 2–118 form the MTTase N-terminal domain; sequence AKIFTISLGC…IDNVIKRPKH (117 aa). Cys11, Cys47, Cys81, Cys150, Cys154, and Cys157 together coordinate [4Fe-4S] cluster. The region spanning 136 to 368 is the Radical SAM core domain; sequence LTAPHSAYLK…AQSRVIDSIN (233 aa). In terms of domain architecture, TRAM spans 369-430; sequence RKLKGKTVKV…KGYNRTGKII (62 aa).

It belongs to the methylthiotransferase family. RimO subfamily. It depends on [4Fe-4S] cluster as a cofactor.

It is found in the cytoplasm. It carries out the reaction L-aspartate(89)-[ribosomal protein uS12]-hydrogen + (sulfur carrier)-SH + AH2 + 2 S-adenosyl-L-methionine = 3-methylsulfanyl-L-aspartate(89)-[ribosomal protein uS12]-hydrogen + (sulfur carrier)-H + 5'-deoxyadenosine + L-methionine + A + S-adenosyl-L-homocysteine + 2 H(+). Functionally, catalyzes the methylthiolation of an aspartic acid residue of ribosomal protein uS12. This Elusimicrobium minutum (strain Pei191) protein is Ribosomal protein uS12 methylthiotransferase RimO.